The sequence spans 133 residues: Large ribosomal subunit protein uL22 (133 aa).

It belongs to the universal ribosomal protein uL22 family. As to quaternary structure, part of the 50S ribosomal subunit.

In terms of biological role, this protein binds specifically to 23S rRNA; its binding is stimulated by other ribosomal proteins, e.g. L4, L17, and L20. It is important during the early stages of 50S assembly. It makes multiple contacts with different domains of the 23S rRNA in the assembled 50S subunit and ribosome. The globular domain of the protein is located near the polypeptide exit tunnel on the outside of the subunit, while an extended beta-hairpin is found that lines the wall of the exit tunnel in the center of the 70S ribosome. This Nocardia farcinica (strain IFM 10152) protein is Large ribosomal subunit protein uL22.